The sequence spans 326 residues: L-Ala--D-Glu endopeptidase (326 aa).

The N-terminal stretch at 1–19 (MKVLLSALLLLLFAFEPSA) is a signal peptide. Histidine 204, aspartate 208, histidine 292, and histidine 294 together coordinate Zn(2+).

It belongs to the peptidase M23B family. Requires Zn(2+) as cofactor.

L-Ala--D-Glu endopeptidase involved in production of single L-alanine side chains from tetrapeptides in the spore cortex peptidoglycan. Therefore, is required for the endospore cortex maturation. This is L-Ala--D-Glu endopeptidase (lytH) from Bacillus subtilis (strain 168).